Reading from the N-terminus, the 1027-residue chain is Sodium/potassium-transporting ATPase subunit alpha-1 (1027 aa).

Positions 1–5 are excised as a propeptide; that stretch reads MGVGD. Basic and acidic residues predominate over residues 1 to 10; that stretch reads MGVGDGRDQY. Residues 1-39 form a disordered region; it reads MGVGDGRDQYELAAMSEQSGKKKSKNKKEKKEKDMDELK. Over 6-90 the chain is Cytoplasmic; the sequence is GRDQYELAAM…NALTPPPTTP (85 aa). Ser16 bears the Phosphoserine; by PKC mark. Residues 29–39 show a composition bias toward basic and acidic residues; sequence EKKEKDMDELK. The segment at 85–87 is interaction with phosphoinositide-3 kinase; the sequence is PPP. A helical transmembrane segment spans residues 91–111; it reads EWVKFCKQMFGGFSMLLWTGA. Residues 112–134 lie on the Extracellular side of the membrane; it reads VLCFLAYGILAAMEDEPANDNLY. A helical transmembrane segment spans residues 135–155; the sequence is LGVVLSAVVIITGCFSYYQDA. At 156–291 the chain is on the cytoplasmic side; the sequence is KSSKIMDSFK…VGRTPISIEI (136 aa). The interval 217-238 is disordered; it reads DNSSLTGESEPQTRSPDFSNDN. Residues 292–311 form a helical membrane-spanning segment; it reads EHFIHIITGVAVFLGVSFLL. The Extracellular segment spans residues 312–323; sequence LSLVLGYSWLEA. A helical transmembrane segment spans residues 324 to 341; it reads VIFLIGIIVANVPEGLLA. The Cytoplasmic segment spans residues 342–776; that stretch reads TVTVCLTLTA…EEGRLIFDNL (435 aa). Asp379 (4-aspartylphosphate intermediate) is an active-site residue. Residue Lys490 participates in ATP binding. Mg(2+)-binding residues include Asp721 and Asp725. The chain crosses the membrane as a helical span at residues 777–796; sequence KKSIAYTLTSNIPEITPFLF. Over 797-806 the chain is Extracellular; that stretch reads FIIANIPLPL. Residues 807–827 form a helical membrane-spanning segment; sequence GTVTILCIDLGTDMLPAISLA. Over 828–847 the chain is Cytoplasmic; sequence YEAAESDIMKRQPRNPKTDK. Residues 848-870 traverse the membrane as a helical segment; the sequence is LVNERLISIAYGQIGMIQALAGF. Residues 871 to 922 lie on the Extracellular side of the membrane; sequence FTYFVILAENGFLPPRLLGIRMNWDDKYINDLEDSYGQQWTYEQRKIVEFTC. A helical transmembrane segment spans residues 923-942; it reads HTAFFTSIVIVQWADLIICK. The Cytoplasmic segment spans residues 943–955; that stretch reads TRRNSVFQQGMKN. Ser947 is subject to Phosphoserine; by PKA. A helical membrane pass occupies residues 956–974; it reads KILIFGLFEETALAAFLSY. The Extracellular segment spans residues 975–989; sequence CPGMDVALRMYPLKP. A helical membrane pass occupies residues 990 to 1010; the sequence is NWWFCAFPYSLLIFIYDEIRK. At 1011-1027 the chain is on the cytoplasmic side; that stretch reads LILRRNPGGWMERETYY.

Belongs to the cation transport ATPase (P-type) (TC 3.A.3) family. Type IIC subfamily. In terms of assembly, the sodium/potassium-transporting ATPase is composed of a catalytic alpha subunit, an auxiliary non-catalytic beta subunit and an additional regulatory subunit.

Its subcellular location is the cell membrane. The protein localises to the sarcolemma. It carries out the reaction K(+)(out) + Na(+)(in) + ATP + H2O = K(+)(in) + Na(+)(out) + ADP + phosphate + H(+). Its function is as follows. This is the catalytic component of the active enzyme, which catalyzes the hydrolysis of ATP coupled with the exchange of sodium and potassium ions across the plasma membrane. This action creates the electrochemical gradient of sodium and potassium ions, providing the energy for active transport of various nutrients. The polypeptide is Sodium/potassium-transporting ATPase subunit alpha-1 (atp1a1) (Catostomus commersonii (White sucker)).